A 1073-amino-acid chain; its full sequence is Probable cellulose synthase A catalytic subunit 2 [UDP-forming] (1073 aa).

Residues 1–270 (MDGAKSGKQC…SSSRINPYRM (270 aa)) are Cytoplasmic-facing. The Zn(2+) site is built by Cys-13, Cys-16, Cys-32, Cys-35, Cys-40, Cys-43, Cys-55, and Cys-58. The RING-type; degenerate zinc finger occupies 13–59 (CQICGDGVGTAADGELFTACDVCGFPVCRPCYEYERKDGSQACPQCK). The tract at residues 66-98 (KGSPPILGDESDDVDADDASDVNYPTSGNQDHK) is disordered. Acidic residues predominate over residues 74–85 (DESDDVDADDAS). Residues 271 to 291 (VIVLRLIVLCIFLHYRITNPV) traverse the membrane as a helical segment. Residues 292 to 293 (RN) are Extracellular-facing. The chain crosses the membrane as a helical span at residues 294-314 (AYPLWLLSVICEIWFALSWIL). Residues 315 to 856 (DQFPKWSPIN…INTTIYPLTS (542 aa)) are Cytoplasmic-facing. Residues Ser-353, Lys-359, Glu-360, and Asp-389 each coordinate UDP-alpha-D-glucose. Residue Asp-389 is part of the active site. The stretch at 443–470 (VKDRRAMKREYEEFKVRVNALVAKAQKV) forms a coiled coil. Lys-530 serves as a coordination point for UDP-alpha-D-glucose. 2 residues coordinate Mn(2+): Lys-531 and Asp-555. The interval 655-676 (GGRKKTKKSKEKSTEKKKSHKH) is disordered. Residue Asp-773 is part of the active site. Residues 857-877 (IPLLLYCILPAICLLTGKFII) form a helical membrane-spanning segment. The Extracellular segment spans residues 878-882 (PEISN). The helical transmembrane segment at 883-903 (FASIWFISLFLSIFATGILEM) threads the bilayer. The Cytoplasmic segment spans residues 904-918 (RWSGVGIDEWWRNEQ). Residues 919 to 939 (FWVIGGISAHLFAVFQGLLKV) form a helical membrane-spanning segment. Topologically, residues 940–969 (LAGIDTSFTVTSKASDEEGDFAELYMFKWT) are extracellular. The helical transmembrane segment at 970–990 (TLLIPPTTILIINLVGVVAGI) threads the bilayer. Topologically, residues 991–1001 (SYAINSGYQSW) are cytoplasmic. Residues 1002–1022 (GPLFGKLFFAFWVIVHLYPFL) form a helical membrane-spanning segment. At 1023–1031 (KGLMGRQNR) the chain is on the extracellular side. The chain crosses the membrane as a helical span at residues 1032-1052 (TPTIVVVWAILLASIFSLLWV). Residues 1053–1073 (RIDPFTTRVTGPDTQKCGINC) are Cytoplasmic-facing.

This sequence belongs to the glycosyltransferase 2 family. Plant cellulose synthase subfamily. It depends on Mn(2+) as a cofactor. Requires Zn(2+) as cofactor.

It is found in the cell membrane. It catalyses the reaction [(1-&gt;4)-beta-D-glucosyl](n) + UDP-alpha-D-glucose = [(1-&gt;4)-beta-D-glucosyl](n+1) + UDP + H(+). It functions in the pathway glycan metabolism; plant cellulose biosynthesis. Its function is as follows. Probable catalytic subunit of cellulose synthase terminal complexes ('rosettes'), required for beta-1,4-glucan microfibril crystallization, a major mechanism of the cell wall formation. The protein is Probable cellulose synthase A catalytic subunit 2 [UDP-forming] (CESA2) of Oryza sativa subsp. japonica (Rice).